The sequence spans 497 residues: ADP-dependent glucokinase (497 aa).

An N-terminal signal peptide occupies residues 1–22 (MALWRGSAYAGFLALAVGCVFL). The ADPK domain occupies 52 to 497 (SPEGRLAAAW…LFYSEVHPHL (446 aa)). Glutamate 297, glutamate 328, and aspartate 481 together coordinate Mg(2+). Residue aspartate 481 is the Proton acceptor of the active site.

The protein belongs to the ADP-dependent glucokinase family. As to quaternary structure, monomer. Requires Mg(2+) as cofactor.

Its subcellular location is the secreted. The enzyme catalyses D-glucose + ADP = D-glucose 6-phosphate + AMP + H(+). It functions in the pathway carbohydrate degradation; glycolysis. Its function is as follows. Catalyzes the phosphorylation of D-glucose to D-glucose 6-phosphate using ADP as the phosphate donor. GDP and CDP can replace ADP, but with reduced efficiency. This chain is ADP-dependent glucokinase (ADPGK), found in Bos taurus (Bovine).